Here is a 346-residue protein sequence, read N- to C-terminus: MVNNEYQQLNTLVESDDEADLVIANLVKQLNELKQILVSLDNQEASATAVTDKKEEEYNQNQSSFHNFSKETLQKQAKRGFLLLERCSLVGLQQLELEYVNLLGRSFDSYQQKTELLNNLKELVDEHFSDTEKIINTLEKIFDVIGGSEYTPVLNSFFNKLLSDPDPIQREIGLRQFIITLRQRFKKLSQKIDSSLKQIETEAKIATEQVQNSEVMFGPPDIANDHELNLNWPDSETDAILSSMENELEAALLAKHQEEPPLIVTPPSLIKPTVSQPEVEVVTPTNNTNFQPQVDLKPTDLKKQQKKKPLNFITRPVFKSNLPPKLSKDDIVHYAHQLLEKNTHNE.

This is an uncharacterized protein from Mycoplasma genitalium (strain ATCC 33530 / DSM 19775 / NCTC 10195 / G37) (Mycoplasmoides genitalium).